A 424-amino-acid chain; its full sequence is D-inositol 3-phosphate glycosyltransferase (424 aa).

H9 serves as a coordination point for 1D-myo-inositol 3-phosphate. UDP-N-acetyl-alpha-D-glucosamine is bound by residues 15–16 (QP) and G23. Residues 20–25 (DSGGMN), K78, Y110, T134, and R154 contribute to the 1D-myo-inositol 3-phosphate site. Residues R231, K236, and R294 each contribute to the UDP-N-acetyl-alpha-D-glucosamine site. Positions 303, 304, and 306 each coordinate Mg(2+). 2 residues coordinate UDP-N-acetyl-alpha-D-glucosamine: E316 and E324. Residue T330 participates in Mg(2+) binding.

The protein belongs to the glycosyltransferase group 1 family. MshA subfamily. In terms of assembly, homodimer.

The catalysed reaction is 1D-myo-inositol 3-phosphate + UDP-N-acetyl-alpha-D-glucosamine = 1D-myo-inositol 2-acetamido-2-deoxy-alpha-D-glucopyranoside 3-phosphate + UDP + H(+). Its function is as follows. Catalyzes the transfer of a N-acetyl-glucosamine moiety to 1D-myo-inositol 3-phosphate to produce 1D-myo-inositol 2-acetamido-2-deoxy-glucopyranoside 3-phosphate in the mycothiol biosynthesis pathway. This is D-inositol 3-phosphate glycosyltransferase from Corynebacterium efficiens (strain DSM 44549 / YS-314 / AJ 12310 / JCM 11189 / NBRC 100395).